The following is a 190-amino-acid chain: MLTFWLAVATLSALALVAGAVLGFAARRFQVKTDPVAERIDALLPQSQCAQCGYPGCRPYAEAVAGGAPINKCVPGGEAVMLKIAAQLSVDPQPMDGEASSRPESRVAWIDEGNCIGCTKCIQACPVDAIVGATRAVHTVVSDLCTGCDLCVAPCPTNCIEMRPLAITPTSWKWDLRTIPITVIQQEQHV.

The tract at residues 1–26 is hydrophobic; it reads MLTFWLAVATLSALALVAGAVLGFAA. The 4Fe-4S domain maps to 32-90; sequence KTDPVAERIDALLPQSQCAQCGYPGCRPYAEAVAGGAPINKCVPGGEAVMLKIAAQLSV. Residues C49, C52, C57, C73, C115, C118, C121, C125, C145, C148, C151, and C155 each coordinate [4Fe-4S] cluster. 2 consecutive 4Fe-4S ferredoxin-type domains span residues 106 to 135 and 136 to 165; these read RVAW…GATR and AVHT…MRPL.

This sequence belongs to the 4Fe4S bacterial-type ferredoxin family. RnfB subfamily. The complex is composed of six subunits: RnfA, RnfB, RnfC, RnfD, RnfE and RnfG. Requires [4Fe-4S] cluster as cofactor.

It is found in the cell inner membrane. Part of a membrane-bound complex that couples electron transfer with translocation of ions across the membrane. The chain is Ion-translocating oxidoreductase complex subunit B from Sodalis glossinidius (strain morsitans).